The chain runs to 259 residues: Major prion protein (259 aa).

Positions 1–24 (MGKIQLGYWILVLFIVTWSDLGLC) are cleaved as a signal peptide. Residues 25–235 (KKPKPRPGGG…EYEAAAQRAY (211 aa)) are interaction with GRB2, ERI3 and SYN1. Residues 29-110 (PRPGGGWNSG…GYNKWKPDKP (82 aa)) are disordered. 8 residues coordinate Cu(2+): Gly63, Gly64, His72, Gly74, His82, Gly84, His92, and Gly94. A compositionally biased stretch (gly residues) spans 91–101 (PHGGSNWGQGG). Cys184 and Cys219 are disulfide-bonded. Residues Asn186 and Asn202 are each glycosylated (N-linked (GlcNAc...) asparagine). Asn236 carries GPI-anchor amidated asparagine lipidation. Residues 237–259 (MAFFSAPPVTLLFLSFLIFLIVS) constitute a propeptide, removed in mature form.

Belongs to the prion family. Monomer and homodimer. Has a tendency to aggregate into amyloid fibrils containing a cross-beta spine, formed by a steric zipper of superposed beta-strands. Soluble oligomers may represent an intermediate stage on the path to fibril formation. Copper binding may promote oligomerization. Interacts with GRB2, APP, ERI3/PRNPIP and SYN1. Mislocalized cytosolically exposed PrP interacts with MGRN1; this interaction alters MGRN1 subcellular location and causes lysosomal enlargement. Interacts with KIAA1191.

It localises to the cell membrane. The protein localises to the golgi apparatus. Functionally, its primary physiological function is unclear. Has cytoprotective activity against internal or environmental stresses. May play a role in neuronal development and synaptic plasticity. May be required for neuronal myelin sheath maintenance. May play a role in iron uptake and iron homeostasis. Soluble oligomers are toxic to cultured neuroblastoma cells and induce apoptosis (in vitro). Association with GPC1 (via its heparan sulfate chains) targets PRNP to lipid rafts. Also provides Cu(2+) or Zn(2+) for the ascorbate-mediated GPC1 deaminase degradation of its heparan sulfate side chains. This is Major prion protein (PRNP) from Trichosurus vulpecula (Brush-tailed possum).